The sequence spans 283 residues: uncharacterized protein (283 aa).

The region spanning 4–131 (RPLHAFEVVA…MGPGGAYAPD (128 aa)) is the FAD-binding FR-type domain.

This is an uncharacterized protein from Mycobacterium bovis (strain ATCC BAA-935 / AF2122/97).